We begin with the raw amino-acid sequence, 307 residues long: Potassium channel subfamily K member 7 (307 aa).

At 1 to 10 (MGSLKPWARY) the chain is on the cytoplasmic side. Residues 11 to 31 (LLLLMAHLLAMGLGAVVLQAL) form a helical membrane-spanning segment. N-linked (GlcNAc...) asparagine glycosylation is present at asparagine 83. The pore-forming intramembrane region spans 92-118 (LPSALLFTASILTTTGYGHMAPLSSGG). Residues 120 to 140 (AFCVVYAALGLPASLALVAAL) traverse the membrane as a helical segment. The Cytoplasmic segment spans residues 141–172 (RHCLLPVFSRPGDWVAIRWQLAPAQAALLQAA). A helical transmembrane segment spans residues 173 to 193 (GLGLLVACVFMLLPALVLWGV). The segment at residues 199–227 (LLEAIYFCFGSLSTIGLGDLLPAHGRGLH) is an intramembrane region (pore-forming). The helical transmembrane segment at 233 to 253 (LGQFALLGYLLLGLLAMLLAV) threads the bilayer. Topologically, residues 254–307 (ETFSELPQVRAMVKFFGPSGSRTDEDQDGILGQDELALSTVLPDAPVLGPTTPA) are cytoplasmic.

It belongs to the two pore domain potassium channel (TC 1.A.1.8) family. As to quaternary structure, homodimer. Detected in embryo, eye, lung and liver. Weakly expressed in colon, testis, atria, kidney, intestine, bladder, uterus, ovary, salivary gland, thymus and brain stem. Not detected in brain, cerebellum, spinal cord, heart, ventricle, skeletal muscle, liver, placenta and pancreas. In the eye, highly expressed in the retinal ganglion cell layer and inner nuclear layer.

It localises to the membrane. Probable potassium channel subunit. No channel activity observed in vitro as protein remains in the endoplasmic reticulum. May need to associate with an as yet unknown partner in order to reach the plasma membrane. The protein is Potassium channel subfamily K member 7 (Kcnk7) of Mus musculus (Mouse).